Here is a 362-residue protein sequence, read N- to C-terminus: Probable secreted beta-glucosidase UTH1 (362 aa).

A signal peptide spans 1–17; it reads MKLSALLALSASTAVLA.

Belongs to the SUN family.

It localises to the mitochondrion outer membrane. Its subcellular location is the secreted. The protein resides in the cell wall. Involved in aging, oxidative stress response, and in the regulation of mitochondrial biogenesis. Inactivation of UTH1 increases life span, leads to higher resistance to heat stress and to hydrogen peroxide, and increases sensitivity to the superoxide radical-generating drug paraquat and to copper. Also required for the selective autophagic degradation of mitochondria (mitophagy) in response to nitrogen starvation. May play a role in cell wall morphogenesis and septation. Involved in the remodeling of the cell wall during the various phases of yeast culture development and under various environmental conditions and plays a role in septation. Involved in cell sensitivity to boric acid. The polypeptide is Probable secreted beta-glucosidase UTH1 (UTH1) (Saccharomyces cerevisiae (strain YJM789) (Baker's yeast)).